Consider the following 496-residue polypeptide: UDP-N-acetylmuramate--L-alanine ligase (496 aa).

122–128 (GTHGKTT) serves as a coordination point for ATP.

This sequence belongs to the MurCDEF family.

Its subcellular location is the cytoplasm. It catalyses the reaction UDP-N-acetyl-alpha-D-muramate + L-alanine + ATP = UDP-N-acetyl-alpha-D-muramoyl-L-alanine + ADP + phosphate + H(+). Its pathway is cell wall biogenesis; peptidoglycan biosynthesis. Its function is as follows. Cell wall formation. The protein is UDP-N-acetylmuramate--L-alanine ligase of Mycobacterium avium (strain 104).